The sequence spans 82 residues: Small ribosomal subunit protein bS16 (82 aa).

The protein belongs to the bacterial ribosomal protein bS16 family.

The chain is Small ribosomal subunit protein bS16 from Klebsiella pneumoniae subsp. pneumoniae (strain ATCC 700721 / MGH 78578).